The following is a 141-amino-acid chain: Large ribosomal subunit protein uL11 (141 aa).

This sequence belongs to the universal ribosomal protein uL11 family. As to quaternary structure, part of the ribosomal stalk of the 50S ribosomal subunit. Interacts with L10 and the large rRNA to form the base of the stalk. L10 forms an elongated spine to which L12 dimers bind in a sequential fashion forming a multimeric L10(L12)X complex. In terms of processing, one or more lysine residues are methylated.

Functionally, forms part of the ribosomal stalk which helps the ribosome interact with GTP-bound translation factors. The sequence is that of Large ribosomal subunit protein uL11 from Thermotoga petrophila (strain ATCC BAA-488 / DSM 13995 / JCM 10881 / RKU-1).